Reading from the N-terminus, the 349-residue chain is Protein RecA (349 aa).

Position 71–75 (71–75 (SSGKT)) interacts with phosphate. ATP contacts are provided by residues 71–76 (SSGKTT) and 102–105 (DPEY). Gln-196 contributes to the phosphate binding site.

This sequence belongs to the RecA family. Polymerizes non-specifically on ssDNA to form filaments. Interacts with and activates LexA leading to autocatalytic cleavage of LexA, which derepresses the SOS regulon and activates DNA repair.

It is found in the cytoplasm. Required for homologous recombination (HR) and the bypass of mutagenic DNA lesions (double strand breaks, DSB) by the SOS response. Can catalyze the hydrolysis of ATP in the presence of single-stranded DNA, the ATP-dependent uptake of single-stranded DNA by duplex DNA, and the ATP-dependent hybridization of homologous single-stranded DNAs. Numerous X-ray crystals have been resolved under different conditions which indicate the flexibility of the protein, essential to its function. Gln-196 contributes to this plasticity by acting as a switch residue, which transmits the effect of nucleotide binding to the DNA-binding region. In Mycolicibacterium smegmatis (strain ATCC 700084 / mc(2)155) (Mycobacterium smegmatis), this protein is Protein RecA.